A 237-amino-acid polypeptide reads, in one-letter code: Ribonuclease PH (237 aa).

Residues Arg86 and 124-126 (GTR) contribute to the phosphate site.

This sequence belongs to the RNase PH family. As to quaternary structure, homohexameric ring arranged as a trimer of dimers.

The catalysed reaction is tRNA(n+1) + phosphate = tRNA(n) + a ribonucleoside 5'-diphosphate. Functionally, phosphorolytic 3'-5' exoribonuclease that plays an important role in tRNA 3'-end maturation. Removes nucleotide residues following the 3'-CCA terminus of tRNAs; can also add nucleotides to the ends of RNA molecules by using nucleoside diphosphates as substrates, but this may not be physiologically important. Probably plays a role in initiation of 16S rRNA degradation (leading to ribosome degradation) during starvation. This Cereibacter sphaeroides (strain KD131 / KCTC 12085) (Rhodobacter sphaeroides) protein is Ribonuclease PH.